Consider the following 342-residue polypeptide: Anthranilate phosphoribosyltransferase (342 aa).

5-phospho-alpha-D-ribose 1-diphosphate contacts are provided by residues Gly90, 93–94 (GD), Thr98, 100–103 (NIST), 118–126 (KHGNRSVSS), and Ala130. Gly90 is a binding site for anthranilate. Ser102 is a Mg(2+) binding site. Asn121 is an anthranilate binding site. Arg176 provides a ligand contact to anthranilate. Residues Asp234 and Glu235 each contribute to the Mg(2+) site.

The protein belongs to the anthranilate phosphoribosyltransferase family. As to quaternary structure, homodimer. Mg(2+) is required as a cofactor.

It catalyses the reaction N-(5-phospho-beta-D-ribosyl)anthranilate + diphosphate = 5-phospho-alpha-D-ribose 1-diphosphate + anthranilate. It functions in the pathway amino-acid biosynthesis; L-tryptophan biosynthesis; L-tryptophan from chorismate: step 2/5. Catalyzes the transfer of the phosphoribosyl group of 5-phosphorylribose-1-pyrophosphate (PRPP) to anthranilate to yield N-(5'-phosphoribosyl)-anthranilate (PRA). This is Anthranilate phosphoribosyltransferase from Mannheimia succiniciproducens (strain KCTC 0769BP / MBEL55E).